The sequence spans 304 residues: MSLFHLIAPSGYCIKQHAALRGIQRLTDAGHQVNNVEVIARRCERFAGTETERLEDLNSLARLTTPNTIVLSVRGGYGASRLLADIDWQALVARQQHDPLLICGHSDFTAIQCGLLAQGNVITFSGPMLVANFGADELNAFTEHHFWLALRNKTFTIEWQGEGPTCQTEGTLWGGNLAMLISLIGTPWMPKIENGILVLEDINEHPFRVERMLLQLYHAGILPRQKAIILGSFSGSTPNDYDAGYNLESVYAFLRSRLSIPLITGLDFGHEQRTVTLPLGAHAILNNTQEGTQLTISGHPVLKM.

S106 functions as the Nucleophile in the catalytic mechanism. Active-site charge relay system residues include E200 and H270.

It belongs to the peptidase S66 family.

The protein resides in the cytoplasm. The catalysed reaction is N-acetyl-D-glucosaminyl-N-acetylmuramoyl-L-alanyl-meso-2,6-diaminoheptanedioyl-D-alanine + H2O = N-acetyl-D-glucosaminyl-N-acetylmuramoyl-L-alanyl-meso-2,6-diaminoheptanedioate + D-alanine. It functions in the pathway cell wall biogenesis; peptidoglycan recycling. Functionally, releases the terminal D-alanine residue from the cytoplasmic tetrapeptide recycling product L-Ala-gamma-D-Glu-meso-Dap-D-Ala. Can also cleave D-Ala from murein derivatives containing the tetrapeptide, i.e. MurNAc-tetrapeptide, UDP-MurNAc-tetrapeptide, GlcNAc-MurNAc-tetrapeptide, and GlcNAc-anhMurNAc-tetrapeptide. Does not act on murein sacculi or cross-linked muropeptides. The tripeptides produced by the LcdA reaction can then be reused as peptidoglycan building blocks; LcdA is thereby involved in murein recycling. The protein is Murein tetrapeptide carboxypeptidase (ldcA) of Escherichia coli O6:H1 (strain CFT073 / ATCC 700928 / UPEC).